A 208-amino-acid polypeptide reads, in one-letter code: Ribonuclease HII (208 aa).

The 190-residue stretch at 13–202 (DLVAGVDEVG…VRQAYEAREA (190 aa)) folds into the RNase H type-2 domain. D19, E20, and D111 together coordinate a divalent metal cation.

Belongs to the RNase HII family. Requires Mn(2+) as cofactor. It depends on Mg(2+) as a cofactor.

The protein resides in the cytoplasm. The enzyme catalyses Endonucleolytic cleavage to 5'-phosphomonoester.. Endonuclease that specifically degrades the RNA of RNA-DNA hybrids. The polypeptide is Ribonuclease HII (Pseudomonas fluorescens (strain ATCC BAA-477 / NRRL B-23932 / Pf-5)).